The primary structure comprises 175 residues: MKLNKLALVLGLGLSVVAGSALAADQGHGTVKFVGSIIDAPCSITPDTENQTVPLGQISTAALKDGGRSNSRDFKISLENCTTETYKTVQTTFTGSEATEVLEGSLGIEGIAKNAAVVITDAGGKQIKLGTPSAAQNLRDGNNDLNFAAYLQGSASEAAVPGDFTAIATFALTYQ.

The first 23 residues, 1–23 (MKLNKLALVLGLGLSVVAGSALA), serve as a signal peptide directing secretion. A disulfide bond links Cys-42 and Cys-81.

It belongs to the fimbrial protein family.

The protein resides in the fimbrium. In terms of biological role, major structural component of mannose-resistant/proteus-like fimbriae of P.mirabilis. This is Major MR/P fimbria protein (mrpA) from Proteus mirabilis (strain HI4320).